The primary structure comprises 124 residues: Ribonuclease pancreatic (124 aa).

Over residues 1–13 (KESAAAKFERQHM) the composition is skewed to basic and acidic residues. Residues 1–24 (KESAAAKFERQHMDPSTSSASSSN) are disordered. Residues K7 and R10 each coordinate substrate. H12 (proton acceptor) is an active-site residue. Intrachain disulfides connect C26–C84, C40–C95, C58–C110, and C65–C72. Substrate contacts are provided by residues 41–45 (KPVNT), K66, and R85. Catalysis depends on H119, which acts as the Proton donor.

This sequence belongs to the pancreatic ribonuclease family. In terms of assembly, monomer. Interacts with and forms tight 1:1 complexes with RNH1. Dimerization of two such complexes may occur. Interaction with RNH1 inhibits this protein. Pancreas.

The protein localises to the secreted. The catalysed reaction is an [RNA] containing cytidine + H2O = an [RNA]-3'-cytidine-3'-phosphate + a 5'-hydroxy-ribonucleotide-3'-[RNA].. It carries out the reaction an [RNA] containing uridine + H2O = an [RNA]-3'-uridine-3'-phosphate + a 5'-hydroxy-ribonucleotide-3'-[RNA].. Functionally, endonuclease that catalyzes the cleavage of RNA on the 3' side of pyrimidine nucleotides. Acts on single-stranded and double-stranded RNA. This chain is Ribonuclease pancreatic (RNASE1), found in Cervus elaphus (Red deer).